The primary structure comprises 386 residues: Succinate--CoA ligase [ADP-forming] subunit beta (386 aa).

One can recognise an ATP-grasp domain in the interval 9–244 (KEILRKYGVP…HDEEDPLETR (236 aa)). ATP contacts are provided by residues Lys46, 53–55 (GRG), Glu99, Cys102, and Glu107. 2 residues coordinate Mg(2+): Asn199 and Asp213. Residues Asn264 and 321–323 (GIM) contribute to the substrate site.

The protein belongs to the succinate/malate CoA ligase beta subunit family. As to quaternary structure, heterotetramer of two alpha and two beta subunits. Requires Mg(2+) as cofactor.

The catalysed reaction is succinate + ATP + CoA = succinyl-CoA + ADP + phosphate. The enzyme catalyses GTP + succinate + CoA = succinyl-CoA + GDP + phosphate. Its pathway is carbohydrate metabolism; tricarboxylic acid cycle; succinate from succinyl-CoA (ligase route): step 1/1. Functionally, succinyl-CoA synthetase functions in the citric acid cycle (TCA), coupling the hydrolysis of succinyl-CoA to the synthesis of either ATP or GTP and thus represents the only step of substrate-level phosphorylation in the TCA. The beta subunit provides nucleotide specificity of the enzyme and binds the substrate succinate, while the binding sites for coenzyme A and phosphate are found in the alpha subunit. This Rickettsia rickettsii (strain Iowa) protein is Succinate--CoA ligase [ADP-forming] subunit beta.